Reading from the N-terminus, the 341-residue chain is L-threonine 3-dehydrogenase (341 aa).

Cys-38 contacts Zn(2+). Active-site charge relay system residues include Thr-40 and His-43. Residues His-63, Glu-64, Cys-93, Cys-96, Cys-99, and Cys-107 each contribute to the Zn(2+) site. Residues Ile-175, Asp-195, Arg-200, 262-264 (LGI), and 286-287 (IY) each bind NAD(+).

It belongs to the zinc-containing alcohol dehydrogenase family. As to quaternary structure, homotetramer. Zn(2+) serves as cofactor.

Its subcellular location is the cytoplasm. The enzyme catalyses L-threonine + NAD(+) = (2S)-2-amino-3-oxobutanoate + NADH + H(+). It functions in the pathway amino-acid degradation; L-threonine degradation via oxydo-reductase pathway; glycine from L-threonine: step 1/2. Catalyzes the NAD(+)-dependent oxidation of L-threonine to 2-amino-3-ketobutyrate. In Enterobacter sp. (strain 638), this protein is L-threonine 3-dehydrogenase.